A 161-amino-acid chain; its full sequence is MPSFDVVCEANMVEVKNAVEQANKEISTRFDFKGSDSRVEHKEQELTLFADDDFKIEQVNDVLMNKLAKRNVDVRFLDYQDKQKIGGDKMKQVVKIKKGVSGDLAKKIVKTIKDSKIKVQASIQGDAVRVTGAKRDDLQSVIAMLRKEVSDTPLDFNNFRD.

The protein belongs to the YajQ family.

Its function is as follows. Nucleotide-binding protein. This Ralstonia pickettii (strain 12J) protein is Nucleotide-binding protein Rpic_2826.